Consider the following 569-residue polypeptide: Sulfite reductase [NADPH] hemoprotein beta-component (569 aa).

[4Fe-4S] cluster contacts are provided by Cys433, Cys439, Cys478, and Cys482. A siroheme-binding site is contributed by Cys482.

Belongs to the nitrite and sulfite reductase 4Fe-4S domain family. As to quaternary structure, alpha(8)-beta(8). The alpha component is a flavoprotein, the beta component is a hemoprotein. It depends on siroheme as a cofactor. Requires [4Fe-4S] cluster as cofactor.

It carries out the reaction hydrogen sulfide + 3 NADP(+) + 3 H2O = sulfite + 3 NADPH + 4 H(+). Its pathway is sulfur metabolism; hydrogen sulfide biosynthesis; hydrogen sulfide from sulfite (NADPH route): step 1/1. Functionally, component of the sulfite reductase complex that catalyzes the 6-electron reduction of sulfite to sulfide. This is one of several activities required for the biosynthesis of L-cysteine from sulfate. The protein is Sulfite reductase [NADPH] hemoprotein beta-component of Buchnera aphidicola subsp. Acyrthosiphon pisum (strain 5A).